Here is a 2968-residue protein sequence, read N- to C-terminus: Polyketide synthase 37 (2968 aa).

Positions 32–454 (KEPIAIIGIG…GSNSSLFLSS (423 aa)) constitute a Ketosynthase family 3 (KS3) domain. Catalysis depends on for beta-ketoacyl synthase activity residues cysteine 198, histidine 338, and histidine 378. A malonyl-CoA:ACP transacylase (MAT) domain region spans residues 624–950 (FIFSGQGQQW…LSTLSKNSNS (327 aa)). Serine 718 serves as the catalytic For malonyltransferase activity. The tract at residues 1017 to 1157 (PPMFISLDRK…GIIKYGTNYL (141 aa)) is N-terminal hotdog fold. One can recognise a PKS/mFAS DH domain in the interval 1017-1350 (PPMFISLDRK…FKGINSSSSS (334 aa)). The tract at residues 1031–1345 (TPSFEVRLNQ…LTNLEFKGIN (315 aa)) is dehydratase (DH) domain. The Proton acceptor; for dehydratase activity role is filled by histidine 1049. The tract at residues 1183 to 1350 (FKSFNSNEFY…FKGINSSSSS (168 aa)) is C-terminal hotdog fold. The active-site Proton donor; for dehydratase activity is the aspartate 1257. Residues 1522–1547 (SCGGGGGSTNNTISNSSSSISSIDNG) are disordered. Residues 1530–1547 (TNNTISNSSSSISSIDNG) are compositionally biased toward low complexity. An enoyl reductase (ER) domain region spans residues 1718–2053 (GIISDLKIKQ…SGNHIGKILI (336 aa)). A ketoreductase (KR) domain region spans residues 2083-2277 (TYIFTGFGGL…LKSSCIHLAS (195 aa)). The interval 2379 to 2400 (GDGSFDDLNQLEDEGQQGFGNG) is disordered. The 78-residue stretch at 2421-2498 (FDNDFYTKSI…STVELIKNKL (78 aa)) folds into the Carrier domain. Position 2458 is an O-(pantetheine 4'-phosphoryl)serine (serine 2458). Positions 2568–2589 (SSSSNNSNSKNELTSPPPSAKR) are disordered. The segment at 2707 to 2968 (ISHVVGVTST…IEAILFKLIK (262 aa)) is chalcone synthase. Residue cysteine 2747 is part of the active site.

Pantetheine 4'-phosphate is required as a cofactor.

It catalyses the reaction (E)-4-coumaroyl-CoA + 3 malonyl-CoA + 3 H(+) = 2',4,4',6'-tetrahydroxychalcone + 3 CO2 + 4 CoA. The catalysed reaction is hexanoyl-CoA + 3 malonyl-CoA + 3 H(+) = 2,4,6-trihydroxyphenylhexan-1-one + 3 CO2 + 4 CoA. It participates in secondary metabolite biosynthesis; flavonoid biosynthesis. Polyketide synthase; part of the gene cluster that mediates the biosynthesis of DIF-1 (Differentiation Inducing Factor-1), a signal molecule involved in the differentiation of pstO (prestalk-O) cells. The three-step process begins with the formation of (2,4,6-trihydroxyphenyl)-1-hexan-1-one (THPH) by the polyketide synthase StlB. THPH is then dichlorinated by the flavin-dependent halogenase ChlA. The last step of DIF-1 biosynthesis is the O-methylation of dichloro-THPH (or des-methyl-DIF-1) by the methyltransferase DmtA to yield DIF-1. In Dictyostelium discoideum (Social amoeba), this protein is Polyketide synthase 37 (StlB).